A 481-amino-acid polypeptide reads, in one-letter code: tRNA:m(4)X modification enzyme TRM13 homolog (481 aa).

Ala-2 bears the N-acetylalanine mark. Residues 56-83 (RILCPLDPKHTVYEDQLAKHLKKCNSRE) form a CHHC U11-48K-type zinc finger. Zn(2+)-binding residues include Cys-59, His-65, His-75, and Cys-79. Positions 113–140 (SLSEEQLEKLIKKLRKASEGLNSTLKDH) form a coiled coil. Residues 381–408 (ETSNSTTKRQDNQNDDSEEHDDGGYRIT) are disordered.

This sequence belongs to the methyltransferase TRM13 family.

The enzyme catalyses cytidine(4) in tRNA(Pro) + S-adenosyl-L-methionine = 2'-O-methylcytidine(4) in tRNA(Pro) + S-adenosyl-L-homocysteine + H(+). It carries out the reaction cytidine(4) in tRNA(Gly)(GCC) + S-adenosyl-L-methionine = 2'-O-methylcytidine(4) in tRNA(Gly)(GCC) + S-adenosyl-L-homocysteine + H(+). It catalyses the reaction adenosine(4) in tRNA(His) + S-adenosyl-L-methionine = 2'-O-methyladenosine(4) in tRNA(His) + S-adenosyl-L-homocysteine + H(+). Its function is as follows. tRNA methylase which 2'-O-methylates cytidine(4) in tRNA(Pro) and tRNA(Gly)(GCC), and adenosine(4) in tRNA(His). The polypeptide is tRNA:m(4)X modification enzyme TRM13 homolog (TRMT13) (Homo sapiens (Human)).